Here is a 224-residue protein sequence, read N- to C-terminus: Putative adhesin A1C_06425 (224 aa).

Residues 1–22 (MKKLLLIATTSATILSSSISFA) form the signal peptide.

This Rickettsia akari (strain Hartford) protein is Putative adhesin A1C_06425.